A 147-amino-acid chain; its full sequence is Large ribosomal subunit protein uL13 (147 aa).

It belongs to the universal ribosomal protein uL13 family. In terms of assembly, part of the 50S ribosomal subunit.

Its function is as follows. This protein is one of the early assembly proteins of the 50S ribosomal subunit, although it is not seen to bind rRNA by itself. It is important during the early stages of 50S assembly. This Deinococcus geothermalis (strain DSM 11300 / CIP 105573 / AG-3a) protein is Large ribosomal subunit protein uL13.